Consider the following 867-residue polypeptide: Piwi-like protein 1 (867 aa).

Over residues 1 to 11 the composition is skewed to basic residues; sequence MTGRARARARG. The tract at residues 1–70 is disordered; it reads MTGRARARAR…QRGPQDAPKT (70 aa). The span at 28-44 shows a compositional bias: polar residues; the sequence is AQKTLPSHPSEQRQSLQ. The 112-residue stretch at 286-397 folds into the PAZ domain; the sequence is TVLDFMYSLY…LIPELCYLTG (112 aa). The tract at residues 324 to 326 is required for binding 2'-O-methylated 3'-end of piRNAs; it reads TYR. Residues 485 to 621 are MID region; the sequence is SRETRVAPLI…LQMNCKMGGE (137 aa). Residues 561-853 form the Piwi domain; that stretch reads IVVCILSSTR…LAFLVGQSIH (293 aa). Residues Asp-638, Glu-676, Asp-708, and His-842 contribute to the active site.

The protein belongs to the argonaute family. Piwi subfamily. Mg(2+) is required as a cofactor. In terms of processing, methylated on arginine residues; required for the interaction with Tudor domain-containing protein and subsequent localization to the meiotic nuage, also named P granule.

It is found in the cytoplasm. Functionally, endoribonuclease that plays a central role in postnatal germ cells by repressing transposable elements and preventing their mobilization, which is essential for the germline integrity. Acts via the piRNA metabolic process, which mediates the repression of transposable elements during meiosis by forming complexes composed of piRNAs and Piwi proteins and govern the methylation and subsequent repression of transposons. Directly binds methylated piRNAs, a class of 24 to 30 nucleotide RNAs that are generated by a Dicer-independent mechanism and are primarily derived from transposons and other repeated sequence elements. Strongly prefers a uridine in the first position of their guide (g1U preference, also named 1U-bias). Besides their function in transposable elements repression, piRNAs are probably involved in other processes during meiosis such as translation regulation. Not involved in the piRNA amplification loop, also named ping-pong amplification cycle. Acts as an endoribonuclease that cleaves transposon messenger RNAs. In Gallus gallus (Chicken), this protein is Piwi-like protein 1 (PIWIL1).